The chain runs to 96 residues: Small ribosomal subunit protein bS6 (96 aa).

The protein belongs to the bacterial ribosomal protein bS6 family.

Its function is as follows. Binds together with bS18 to 16S ribosomal RNA. This chain is Small ribosomal subunit protein bS6, found in Bacillus thuringiensis subsp. konkukian (strain 97-27).